A 216-amino-acid chain; its full sequence is Ribosomal RNA small subunit methyltransferase G (216 aa).

Residues G73, L78, 124–125, and R139 contribute to the S-adenosyl-L-methionine site; that span reads AE.

Belongs to the methyltransferase superfamily. RNA methyltransferase RsmG family.

It localises to the cytoplasm. Specifically methylates the N7 position of guanine in position 518 of 16S rRNA. The polypeptide is Ribosomal RNA small subunit methyltransferase G (Arthrobacter sp. (strain FB24)).